Here is a 585-residue protein sequence, read N- to C-terminus: Aspartate--tRNA(Asp/Asn) ligase (585 aa).

Position 173 (Glu-173) interacts with L-aspartate. Residues 197-200 are aspartate; the sequence is QLFK. Arg-219 lines the L-aspartate pocket. ATP-binding positions include 219–221 and Gln-228; that span reads RDE. Residue His-447 coordinates L-aspartate. Glu-477 contributes to the ATP binding site. Residue Arg-484 coordinates L-aspartate. Residue 529 to 532 coordinates ATP; that stretch reads GFDR.

This sequence belongs to the class-II aminoacyl-tRNA synthetase family. Type 1 subfamily. In terms of assembly, homodimer.

It localises to the cytoplasm. It catalyses the reaction tRNA(Asx) + L-aspartate + ATP = L-aspartyl-tRNA(Asx) + AMP + diphosphate. In terms of biological role, aspartyl-tRNA synthetase with relaxed tRNA specificity since it is able to aspartylate not only its cognate tRNA(Asp) but also tRNA(Asn). Reaction proceeds in two steps: L-aspartate is first activated by ATP to form Asp-AMP and then transferred to the acceptor end of tRNA(Asp/Asn). The protein is Aspartate--tRNA(Asp/Asn) ligase of Campylobacter concisus (strain 13826).